We begin with the raw amino-acid sequence, 330 residues long: Ketol-acid reductoisomerase (NADP(+)) (330 aa).

In terms of domain architecture, KARI N-terminal Rossmann spans 1 to 181; sequence MKVFYDSDFK…GLSRAGVIQT (181 aa). NADP(+) contacts are provided by residues 24–27, Arg-47, Ser-52, and 82–85; these read YGSQ and DELQ. His-107 is a catalytic residue. An NADP(+)-binding site is contributed by Gly-133. The KARI C-terminal knotted domain maps to 182–327; that stretch reads TFKEETETDL…AKLRKMCGLE (146 aa). The Mg(2+) site is built by Asp-190, Glu-194, Glu-226, and Glu-230. Ser-251 contacts substrate.

The protein belongs to the ketol-acid reductoisomerase family. Mg(2+) is required as a cofactor.

The enzyme catalyses (2R)-2,3-dihydroxy-3-methylbutanoate + NADP(+) = (2S)-2-acetolactate + NADPH + H(+). It carries out the reaction (2R,3R)-2,3-dihydroxy-3-methylpentanoate + NADP(+) = (S)-2-ethyl-2-hydroxy-3-oxobutanoate + NADPH + H(+). It functions in the pathway amino-acid biosynthesis; L-isoleucine biosynthesis; L-isoleucine from 2-oxobutanoate: step 2/4. It participates in amino-acid biosynthesis; L-valine biosynthesis; L-valine from pyruvate: step 2/4. Involved in the biosynthesis of branched-chain amino acids (BCAA). Catalyzes an alkyl-migration followed by a ketol-acid reduction of (S)-2-acetolactate (S2AL) to yield (R)-2,3-dihydroxy-isovalerate. In the isomerase reaction, S2AL is rearranged via a Mg-dependent methyl migration to produce 3-hydroxy-3-methyl-2-ketobutyrate (HMKB). In the reductase reaction, this 2-ketoacid undergoes a metal-dependent reduction by NADPH to yield (R)-2,3-dihydroxy-isovalerate. In Methanococcus maripaludis (strain DSM 14266 / JCM 13030 / NBRC 101832 / S2 / LL), this protein is Ketol-acid reductoisomerase (NADP(+)).